The chain runs to 520 residues: Amine oxidase [flavin-containing] B (520 aa).

The residue at position 2 (Ser-2) is an N-acetylserine. At 2–489 (SNKCDVVVVG…TFLERHLPSV (488 aa)) the chain is on the cytoplasmic side. At Lys-52 the chain carries N6-acetyllysine. At Cys-397 the chain carries S-8alpha-FAD cysteine. Residues 490-516 (PGLLRLIGLTTIFSATALGFLAHKRGL) form a helical; Anchor for type IV membrane protein membrane-spanning segment. The Mitochondrial intermembrane portion of the chain corresponds to 517–520 (LVRV).

As to quaternary structure, monomer, homo- or heterodimer (containing two subunits of similar size). Each subunit contains a covalently bound flavin. Enzymatically active as monomer. FAD is required as a cofactor.

It is found in the mitochondrion outer membrane. The catalysed reaction is a secondary aliphatic amine + O2 + H2O = a primary amine + an aldehyde + H2O2. It catalyses the reaction (R)-adrenaline + O2 + H2O = (R)-3,4-dihydroxymandelaldehyde + methylamine + H2O2. The enzyme catalyses a primary methyl amine + O2 + H2O = an aldehyde + H2O2 + NH4(+). It carries out the reaction benzylamine + O2 + H2O = benzaldehyde + H2O2 + NH4(+). The catalysed reaction is dopamine + O2 + H2O = 3,4-dihydroxyphenylacetaldehyde + H2O2 + NH4(+). It catalyses the reaction tyramine + O2 + H2O = (4-hydroxyphenyl)acetaldehyde + H2O2 + NH4(+). The enzyme catalyses (R)-noradrenaline + O2 + H2O = (R)-3,4-dihydroxymandelaldehyde + H2O2 + NH4(+). It carries out the reaction 2-phenylethylamine + O2 + H2O = 2-phenylacetaldehyde + H2O2 + NH4(+). The catalysed reaction is N-acetylputrescine + O2 + H2O = 4-acetamidobutanal + H2O2 + NH4(+). Its activity is regulated as follows. Inhibited by deprenyl. Its function is as follows. Catalyzes the oxidative deamination of primary and some secondary amines such as neurotransmitters, and exogenous amines including the tertiary amine, neurotoxin 1-methyl-4-phenyl-1,2,3,6-tetrahydropyridine (MPTP), with concomitant reduction of oxygen to hydrogen peroxide and participates in the metabolism of neuroactive and vasoactive amines in the central nervous system and peripheral tissues. Preferentially degrades benzylamine and phenylethylamine. The sequence is that of Amine oxidase [flavin-containing] B from Homo sapiens (Human).